Consider the following 146-residue polypeptide: D-aminoacyl-tRNA deacylase (146 aa).

Residues 137–138 (GP) carry the Gly-cisPro motif, important for rejection of L-amino acids motif.

Belongs to the DTD family. In terms of assembly, homodimer.

The protein localises to the cytoplasm. It carries out the reaction glycyl-tRNA(Ala) + H2O = tRNA(Ala) + glycine + H(+). It catalyses the reaction a D-aminoacyl-tRNA + H2O = a tRNA + a D-alpha-amino acid + H(+). In terms of biological role, an aminoacyl-tRNA editing enzyme that deacylates mischarged D-aminoacyl-tRNAs. Also deacylates mischarged glycyl-tRNA(Ala), protecting cells against glycine mischarging by AlaRS. Acts via tRNA-based rather than protein-based catalysis; rejects L-amino acids rather than detecting D-amino acids in the active site. By recycling D-aminoacyl-tRNA to D-amino acids and free tRNA molecules, this enzyme counteracts the toxicity associated with the formation of D-aminoacyl-tRNA entities in vivo and helps enforce protein L-homochirality. This Bacillus cereus (strain G9842) protein is D-aminoacyl-tRNA deacylase.